Reading from the N-terminus, the 366-residue chain is Chorismate synthase (366 aa).

Residues arginine 48 and arginine 54 each contribute to the NADP(+) site. Residues 125–127, 238–239, glycine 278, 293–297, and arginine 319 contribute to the FMN site; these read RSS, NA, and KPTSS.

Belongs to the chorismate synthase family. As to quaternary structure, homotetramer. FMNH2 serves as cofactor.

It carries out the reaction 5-O-(1-carboxyvinyl)-3-phosphoshikimate = chorismate + phosphate. It participates in metabolic intermediate biosynthesis; chorismate biosynthesis; chorismate from D-erythrose 4-phosphate and phosphoenolpyruvate: step 7/7. Catalyzes the anti-1,4-elimination of the C-3 phosphate and the C-6 proR hydrogen from 5-enolpyruvylshikimate-3-phosphate (EPSP) to yield chorismate, which is the branch point compound that serves as the starting substrate for the three terminal pathways of aromatic amino acid biosynthesis. This reaction introduces a second double bond into the aromatic ring system. In Paraburkholderia phytofirmans (strain DSM 17436 / LMG 22146 / PsJN) (Burkholderia phytofirmans), this protein is Chorismate synthase.